Here is a 387-residue protein sequence, read N- to C-terminus: Probable NADH-dependent butanol dehydrogenase 1 (387 aa).

The protein belongs to the iron-containing alcohol dehydrogenase family.

It functions in the pathway alcohol metabolism; butanol biosynthesis. The protein is Probable NADH-dependent butanol dehydrogenase 1 (yugJ) of Bacillus subtilis (strain 168).